A 131-amino-acid polypeptide reads, in one-letter code: Neo-calmodulin (131 aa).

EF-hand domains lie at 1-32 (EFKEAFSLFDKDGDGTITTKELGTVMRSLGQN), 33-68 (PTEAELQDMINEVDADGNGTIDFPEFLTMMARKMKD), 70-105 (DSEEEIREAFRVFDKDSNGYISAAELRHVMTNLGEK), and 106-131 (LTDEEVDEMIREADIDGDGQVNYEEF). Ca(2+)-binding residues include Asp-10, Asp-12, Asp-14, Thr-16, Glu-21, Asp-46, Asp-48, Asn-50, Thr-52, Glu-57, Asp-83, Asp-85, Asn-87, Tyr-89, Glu-94, Asp-119, Asp-121, Asp-123, Gln-125, and Glu-130.

It belongs to the calmodulin family.

The sequence is that of Neo-calmodulin from Gallus gallus (Chicken).